The primary structure comprises 89 residues: Small ribosomal subunit protein uS15 (89 aa).

Belongs to the universal ribosomal protein uS15 family. In terms of assembly, part of the 30S ribosomal subunit. Forms a bridge to the 50S subunit in the 70S ribosome, contacting the 23S rRNA.

In terms of biological role, one of the primary rRNA binding proteins, it binds directly to 16S rRNA where it helps nucleate assembly of the platform of the 30S subunit by binding and bridging several RNA helices of the 16S rRNA. Functionally, forms an intersubunit bridge (bridge B4) with the 23S rRNA of the 50S subunit in the ribosome. This is Small ribosomal subunit protein uS15 from Staphylococcus saprophyticus subsp. saprophyticus (strain ATCC 15305 / DSM 20229 / NCIMB 8711 / NCTC 7292 / S-41).